The following is a 307-amino-acid chain: Thioredoxin reductase (307 aa).

34 to 41 (ESKAHGGQ) is an FAD binding site. A disulfide bridge connects residues Cys134 and Cys137. 275 to 284 (DVRAKSFRQV) is an FAD binding site.

It belongs to the class-II pyridine nucleotide-disulfide oxidoreductase family. Homodimer. Requires FAD as cofactor.

It localises to the cytoplasm. It carries out the reaction [thioredoxin]-dithiol + NADP(+) = [thioredoxin]-disulfide + NADPH + H(+). In Treponema pallidum (strain Nichols), this protein is Thioredoxin reductase (trxB).